Reading from the N-terminus, the 359-residue chain is Fructose-bisphosphate aldolase (359 aa).

Residue S50 coordinates D-glyceraldehyde 3-phosphate. The active-site Proton donor is the D83. Zn(2+) is bound by residues H84, D105, E142, and H198. Position 199 (G199) interacts with dihydroxyacetone phosphate. Zn(2+) is bound at residue H232. Dihydroxyacetone phosphate contacts are provided by residues 233–235 (GSS) and 275–278 (NIDT).

Belongs to the class II fructose-bisphosphate aldolase family. Zn(2+) is required as a cofactor.

The catalysed reaction is beta-D-fructose 1,6-bisphosphate = D-glyceraldehyde 3-phosphate + dihydroxyacetone phosphate. It functions in the pathway carbohydrate degradation; glycolysis; D-glyceraldehyde 3-phosphate and glycerone phosphate from D-glucose: step 4/4. Catalyzes the aldol condensation of dihydroxyacetone phosphate (DHAP or glycerone-phosphate) with glyceraldehyde 3-phosphate (G3P) to form fructose 1,6-bisphosphate (FBP) in gluconeogenesis and the reverse reaction in glycolysis. The sequence is that of Fructose-bisphosphate aldolase (fba) from Nostoc commune.